Reading from the N-terminus, the 781-residue chain is Lon protease (781 aa).

The Lon N-terminal domain occupies 16–214 (ANVLVTRGIV…KILSFTIDER (199 aa)). 365-372 (GPPGVGKT) contacts ATP. Positions 601–781 (EYMPGVVNGM…YDDVYNRLFK (181 aa)) constitute a Lon proteolytic domain. Residues S688 and K731 contribute to the active site.

Belongs to the peptidase S16 family. In terms of assembly, homohexamer. Organized in a ring with a central cavity.

The protein localises to the cytoplasm. It catalyses the reaction Hydrolysis of proteins in presence of ATP.. Its function is as follows. ATP-dependent serine protease that mediates the selective degradation of mutant and abnormal proteins as well as certain short-lived regulatory proteins. Required for cellular homeostasis and for survival from DNA damage and developmental changes induced by stress. Degrades polypeptides processively to yield small peptide fragments that are 5 to 10 amino acids long. Binds to DNA in a double-stranded, site-specific manner. In Malacoplasma penetrans (strain HF-2) (Mycoplasma penetrans), this protein is Lon protease.